We begin with the raw amino-acid sequence, 409 residues long: Serine/threonine transporter SstT (409 aa).

The next 9 membrane-spanning stretches (helical) occupy residues 17 to 37 (LVVQ…FFPA), 49 to 69 (FVSA…MASI), 83 to 103 (ILLL…IASF), 142 to 162 (ALIS…GIAF), 180 to 200 (VSLI…GLVA), 218 to 238 (LVVL…LIVF), 299 to 319 (MAGA…TLGI), 331 to 351 (VVAS…LLLI), and 357 to 377 (LFGI…IIAI).

Belongs to the dicarboxylate/amino acid:cation symporter (DAACS) (TC 2.A.23) family.

The protein resides in the cell inner membrane. It catalyses the reaction L-serine(in) + Na(+)(in) = L-serine(out) + Na(+)(out). It carries out the reaction L-threonine(in) + Na(+)(in) = L-threonine(out) + Na(+)(out). Involved in the import of serine and threonine into the cell, with the concomitant import of sodium (symport system). This is Serine/threonine transporter SstT from Pseudomonas paraeruginosa (strain DSM 24068 / PA7) (Pseudomonas aeruginosa (strain PA7)).